A 126-amino-acid chain; its full sequence is Probable prefoldin subunit 4 (126 aa).

This sequence belongs to the prefoldin subunit beta family. As to quaternary structure, heterohexamer of two PFD-alpha type and four PFD-beta type subunits.

Its function is as follows. Binds specifically to cytosolic chaperonin (c-CPN) and transfers target proteins to it. Binds to nascent polypeptide chain and promotes folding in an environment in which there are many competing pathways for nonnative proteins. Appears to play a non-essential role. This is Probable prefoldin subunit 4 from Caenorhabditis briggsae.